A 400-amino-acid chain; its full sequence is Aspartate aminotransferase (400 aa).

The L-aspartate site is built by G42 and N180. K241 is modified (N6-(pyridoxal phosphate)lysine). An L-aspartate-binding site is contributed by R373.

It belongs to the class-I pyridoxal-phosphate-dependent aminotransferase family. Homodimer. It depends on pyridoxal 5'-phosphate as a cofactor.

It is found in the cytoplasm. The catalysed reaction is L-aspartate + 2-oxoglutarate = oxaloacetate + L-glutamate. This chain is Aspartate aminotransferase (aspC), found in Sulfolobus acidocaldarius (strain ATCC 33909 / DSM 639 / JCM 8929 / NBRC 15157 / NCIMB 11770).